The chain runs to 332 residues: Small ribosomal subunit protein uS2 (332 aa).

This sequence belongs to the universal ribosomal protein uS2 family.

In Nitrobacter hamburgensis (strain DSM 10229 / NCIMB 13809 / X14), this protein is Small ribosomal subunit protein uS2.